Here is a 523-residue protein sequence, read N- to C-terminus: 2-isopropylmalate synthase (523 aa).

Positions 5 to 267 (VIIFDTTLRD…HTRINHQEIW (263 aa)) constitute a Pyruvate carboxyltransferase domain. 4 residues coordinate Mn(2+): aspartate 14, histidine 202, histidine 204, and asparagine 238. The regulatory domain stretch occupies residues 392-523 (RLDYFSVQSG…QNKENNKETV (132 aa)).

This sequence belongs to the alpha-IPM synthase/homocitrate synthase family. LeuA type 1 subfamily. Homodimer. Mn(2+) is required as a cofactor.

The protein resides in the cytoplasm. It carries out the reaction 3-methyl-2-oxobutanoate + acetyl-CoA + H2O = (2S)-2-isopropylmalate + CoA + H(+). Its pathway is amino-acid biosynthesis; L-leucine biosynthesis; L-leucine from 3-methyl-2-oxobutanoate: step 1/4. Catalyzes the condensation of the acetyl group of acetyl-CoA with 3-methyl-2-oxobutanoate (2-ketoisovalerate) to form 3-carboxy-3-hydroxy-4-methylpentanoate (2-isopropylmalate). This Citrobacter koseri (strain ATCC BAA-895 / CDC 4225-83 / SGSC4696) protein is 2-isopropylmalate synthase.